Consider the following 273-residue polypeptide: Acetyl-coenzyme A carboxylase carboxyl transferase subunit alpha (273 aa).

Residues 1–244 enclose the CoA carboxyltransferase C-terminal domain; the sequence is MKKATQSKAW…KVVLKQALDE (244 aa).

It belongs to the AccA family. In terms of assembly, acetyl-CoA carboxylase is a heterohexamer composed of biotin carboxyl carrier protein (AccB), biotin carboxylase (AccC) and two subunits each of ACCase subunit alpha (AccA) and ACCase subunit beta (AccD).

The protein localises to the cytoplasm. The catalysed reaction is N(6)-carboxybiotinyl-L-lysyl-[protein] + acetyl-CoA = N(6)-biotinyl-L-lysyl-[protein] + malonyl-CoA. Its pathway is lipid metabolism; malonyl-CoA biosynthesis; malonyl-CoA from acetyl-CoA: step 1/1. In terms of biological role, component of the acetyl coenzyme A carboxylase (ACC) complex. First, biotin carboxylase catalyzes the carboxylation of biotin on its carrier protein (BCCP) and then the CO(2) group is transferred by the carboxyltransferase to acetyl-CoA to form malonyl-CoA. The polypeptide is Acetyl-coenzyme A carboxylase carboxyl transferase subunit alpha (Acinetobacter baumannii (strain ACICU)).